Here is a 201-residue protein sequence, read N- to C-terminus: Superoxide dismutase [Mn] (201 aa).

Mn(2+) is bound by residues H27, H81, D163, and H167.

Belongs to the iron/manganese superoxide dismutase family. Homodimer. It depends on Mn(2+) as a cofactor.

It is found in the secreted. It catalyses the reaction 2 superoxide + 2 H(+) = H2O2 + O2. Functionally, destroys superoxide anion radicals which are normally produced within the cells and which are toxic to biological systems. The protein is Superoxide dismutase [Mn] (sodA) of Streptococcus pyogenes serotype M3 (strain ATCC BAA-595 / MGAS315).